Reading from the N-terminus, the 275-residue chain is Cis-2,3-dihydrobiphenyl-2,3-diol dehydrogenase (275 aa).

An NAD(+)-binding site is contributed by 9 to 33; the sequence is LITGGASGLGRALVDRFVAEAKVAV. S140 lines the substrate pocket. Residue Y153 is the Proton acceptor of the active site.

It belongs to the short-chain dehydrogenases/reductases (SDR) family.

It catalyses the reaction (2R,3S)-3-phenylcyclohexa-3,5-diene-1,2-diol + NAD(+) = biphenyl-2,3-diol + NADH + H(+). Its pathway is xenobiotic degradation; biphenyl degradation; 2-hydroxy-2,4-pentadienoate and benzoate from biphenyl: step 2/4. In Metapseudomonas furukawaii (Pseudomonas furukawaii), this protein is Cis-2,3-dihydrobiphenyl-2,3-diol dehydrogenase (bphB).